The sequence spans 92 residues: Small ribosomal subunit protein uS19c (92 aa).

It belongs to the universal ribosomal protein uS19 family.

It is found in the plastid. The protein localises to the chloroplast. Functionally, protein S19 forms a complex with S13 that binds strongly to the 16S ribosomal RNA. The sequence is that of Small ribosomal subunit protein uS19c (rps19) from Chlorella vulgaris (Green alga).